The following is a 284-amino-acid chain: Bifunctional protein FolD (284 aa).

NADP(+) contacts are provided by residues 165–167 (GRS) and S190.

The protein belongs to the tetrahydrofolate dehydrogenase/cyclohydrolase family. As to quaternary structure, homodimer.

The catalysed reaction is (6R)-5,10-methylene-5,6,7,8-tetrahydrofolate + NADP(+) = (6R)-5,10-methenyltetrahydrofolate + NADPH. It carries out the reaction (6R)-5,10-methenyltetrahydrofolate + H2O = (6R)-10-formyltetrahydrofolate + H(+). It functions in the pathway one-carbon metabolism; tetrahydrofolate interconversion. In terms of biological role, catalyzes the oxidation of 5,10-methylenetetrahydrofolate to 5,10-methenyltetrahydrofolate and then the hydrolysis of 5,10-methenyltetrahydrofolate to 10-formyltetrahydrofolate. The chain is Bifunctional protein FolD from Streptococcus equi subsp. equi (strain 4047).